A 369-amino-acid polypeptide reads, in one-letter code: Porphobilinogen deaminase, chloroplastic (369 aa).

Residues Met1–Ala46 constitute a chloroplast transit peptide. An S-(dipyrrolylmethanemethyl)cysteine modification is found at Cys303.

Belongs to the HMBS family. Dipyrromethane serves as cofactor.

The protein resides in the plastid. It is found in the chloroplast. It carries out the reaction 4 porphobilinogen + H2O = hydroxymethylbilane + 4 NH4(+). It functions in the pathway porphyrin-containing compound metabolism; protoporphyrin-IX biosynthesis; coproporphyrinogen-III from 5-aminolevulinate: step 2/4. It participates in porphyrin-containing compound metabolism; chlorophyll biosynthesis. In terms of biological role, tetrapolymerization of the monopyrrole PBG into the hydroxymethylbilane pre-uroporphyrinogen in several discrete steps. This chain is Porphobilinogen deaminase, chloroplastic (HEMC), found in Pisum sativum (Garden pea).